The following is a 410-amino-acid chain: Sprouty-related, EVH1 domain-containing protein 2 (410 aa).

The WH1 domain occupies 5-122 (THPDDDSYIV…RGVRKAIEDL (118 aa)). Residues 127-171 (TTSSSTIHNEAELGDDDVFTTATDSSSNSSQKREPNTRTISSPTS) form a disordered region. Positions 146–156 (TTATDSSSNSS) are enriched in polar residues. The region spanning 197–252 (SYPQVTFPEDDEEIVRINPREKIWMTGYEDYRHAPVRGKYLDSTEDADSYVRFAKG) is the KBD domain. A phosphotyrosine mark is found at Tyr224 and Tyr227. A disordered region spans residues 274–294 (DPKGNVIKTQPPRAKSRRRKE). Positions 300–408 (RCVYCRDMFN…CRCCGGKHKA (109 aa)) constitute an SPR domain.

Homodimer and heterodimer. Able to interact with SPRED1 to form heterodimers. Interacts with RAS. May interact with ZDHHC13 (via ANK repeats) and ZDHHC17 (via ANK repeats). Interacts with TESK1. Interacts with NF1. In terms of processing, phosphorylated on serine and threonine residues. Phosphorylated on tyrosine. Phosphorylation of Tyr-224 and Tyr-227 are required for ubiquitination. Post-translationally, ubiquitinated; leading to degradation by the proteasome. In terms of tissue distribution, expressed in the eye, with higher expression in lens epithelium than in lens fiber cells at postnatal day 15.

It localises to the cell membrane. The protein localises to the cytoplasmic vesicle. The protein resides in the secretory vesicle membrane. Its subcellular location is the cytoplasm. In terms of biological role, negatively regulates Ras signaling pathways and downstream activation of MAP kinases. Recruits and translocates NF1 to the cell membrane, thereby enabling NF1-dependent hydrolysis of active GTP-bound Ras to inactive GDP-bound Ras. Inhibits fibroblast growth factor (FGF)-induced retinal lens fiber differentiation, probably by inhibiting FGF-mediated phosphorylation of ERK1/2. Inhibits TGFB-induced epithelial-to-mesenchymal transition in lens epithelial cells. The protein is Sprouty-related, EVH1 domain-containing protein 2 (Spred2) of Rattus norvegicus (Rat).